The sequence spans 170 residues: Inosine/xanthosine triphosphatase (170 aa).

The protein belongs to the YjjX NTPase family. As to quaternary structure, homodimer. The cofactor is Mg(2+). It depends on Mn(2+) as a cofactor.

It catalyses the reaction XTP + H2O = XDP + phosphate + H(+). The catalysed reaction is ITP + H2O = IDP + phosphate + H(+). Its function is as follows. Phosphatase that hydrolyzes non-canonical purine nucleotides such as XTP and ITP to their respective diphosphate derivatives. Probably excludes non-canonical purines from DNA/RNA precursor pool, thus preventing their incorporation into DNA/RNA and avoiding chromosomal lesions. This is Inosine/xanthosine triphosphatase from Aliivibrio fischeri (strain ATCC 700601 / ES114) (Vibrio fischeri).